Consider the following 214-residue polypeptide: Redox-sensing transcriptional repressor Rex (214 aa).

The H-T-H motif DNA-binding region spans 16–55 (IYFRYLNVLKDANKQRVSSTELSEAVQVDSATIRRDFSYF). 90–95 (GVGSLG) contributes to the NAD(+) binding site.

This sequence belongs to the transcriptional regulatory Rex family. In terms of assembly, homodimer.

It localises to the cytoplasm. Functionally, modulates transcription in response to changes in cellular NADH/NAD(+) redox state. The sequence is that of Redox-sensing transcriptional repressor Rex from Limosilactobacillus reuteri (strain DSM 20016) (Lactobacillus reuteri).